The sequence spans 1480 residues: Cystic fibrosis transmembrane conductance regulator (1480 aa).

The Cytoplasmic segment spans residues 1 to 77 (MQRSPLEKAS…KLINALRRCF (77 aa)). Residues 78 to 98 (FWRFMFYGIFLYLGEVTKAVQ) traverse the membrane as a helical segment. One can recognise an ABC transmembrane type-1 1 domain in the interval 81–365 (FMFYGIFLYL…WAVQTWYDSL (285 aa)). At 99-122 (PLLLGRIIASYDPDNKEERSIAIY) the chain is on the extracellular side. The chain crosses the membrane as a helical span at residues 123-146 (LGIGLCLLFIVRTLLLHPAIFGLH). Residues 147-195 (HIGMQMRIAMFSLIYKKTLKLSSRVLDKISIGQLVSLLSNNLNKFDEGL) are Cytoplasmic-facing. The helical transmembrane segment at 196–216 (ALAHFVWIAPLQVALLMGLIW) threads the bilayer. The Extracellular segment spans residues 217–222 (ELLQAS). The helical transmembrane segment at 223–243 (AFCGLGFLIVLALFQAGLGRM) threads the bilayer. The Cytoplasmic portion of the chain corresponds to 244 to 298 (MMKYRDQRAGKISERLVITSEMIENIQSVKAYCWEEAMEKMIENLRQTELKLTRK). The chain crosses the membrane as a helical span at residues 299-319 (AAYVRYFNSSAFFFSGFFVVF). The Extracellular segment spans residues 320–339 (LSVLPYALIKGIVLRKIFTT). The chain crosses the membrane as a helical span at residues 340-358 (ISFCIVLRMAVTRQFPWAV). Over 359 to 858 (QTWYDSLGAI…YLRYITVHKS (500 aa)) the chain is Cytoplasmic. Residues Trp-401, Ser-434, 458-465 (GSTGAGKT), and Gln-493 each bind ATP. The region spanning 423 to 646 (NGDDSLFFSN…RPDFSSKLMG (224 aa)) is the ABC transporter 1 domain. The S-palmitoyl cysteine moiety is linked to residue Cys-524. Phosphoserine is present on residues Ser-549 and Ser-660. The segment at 654-831 (SAERRNSILT…EEINEEDLKE (178 aa)) is disordered R region. Phosphoserine; by PKA is present on Ser-670. Position 686 is a phosphoserine (Ser-686). Lys-688 participates in a covalent cross-link: Glycyl lysine isopeptide (Lys-Gly) (interchain with G-Cter in ubiquitin). Phosphoserine is present on residues Ser-700 and Ser-712. Position 717 is a phosphothreonine (Thr-717). Phosphoserine is present on residues Ser-737, Ser-753, Ser-768, Ser-790, Ser-795, and Ser-813. The chain crosses the membrane as a helical span at residues 859 to 879 (LIFVLIWCLVIFLAEVAASLV). Positions 859 to 1155 (LIFVLIWCLV…AVNSSIDVDS (297 aa)) constitute an ABC transmembrane type-1 2 domain. Residues 880–918 (VLWLLGNTPLQDKGNSTHSRNNSYAVIITSTSSYYVFYI) are Extracellular-facing. N-linked (GlcNAc...) asparagine glycans are attached at residues Asn-894 and Asn-900. Residues 919 to 939 (YVGVADTLLAMGFFRGLPLVH) traverse the membrane as a discontinuously helical segment. Residues 940 to 990 (TLITVSKILHHKMLHSVLQAPMSTLNTLKAGGILNRFSKDIAILDDLLPLT) lie on the Cytoplasmic side of the membrane. The chain crosses the membrane as a helical span at residues 991–1011 (IFDFIQLLLIVIGAIAVVAVL). The Extracellular portion of the chain corresponds to 1012–1013 (QP). A helical membrane pass occupies residues 1014–1034 (YIFVATVPVIVAFIMLRAYFL). Residues 1035 to 1095 (QTSQQLKQLE…TANWFLYLST (61 aa)) are Cytoplasmic-facing. A helical transmembrane segment spans residues 1096–1116 (LRWFQMRIEMIFVMFFIAVTF). Topologically, residues 1117 to 1130 (ISILTTGEGEGRIG) are extracellular. The chain crosses the membrane as a helical span at residues 1131-1151 (IILTLAMNIMSTLQWAVNSSI). At 1152–1480 (DVDSLMRSVS…TEEEVQDTRL (329 aa)) the chain is on the cytoplasmic side. In terms of domain architecture, ABC transporter 2 spans 1210–1443 (MTVKDLSAKY…RSLFRQAISP (234 aa)). ATP-binding positions include Tyr-1219 and 1244 to 1251 (GRTGSGKS). Residues 1386 to 1480 (RTLKQAFADC…TEEEVQDTRL (95 aa)) are interaction with GORASP2. A lipid anchor (S-palmitoyl cysteine) is attached at Cys-1395. 2 positions are modified to phosphoserine: Ser-1444 and Ser-1456. The disordered stretch occupies residues 1451–1480 (PHRNSSKGKSQPQIAALKEETEEEVQDTRL). The span at 1470-1480 (ETEEEVQDTRL) shows a compositional bias: acidic residues. Positions 1478–1480 (TRL) match the PDZ-binding motif.

It belongs to the ABC transporter superfamily. ABCC family. CFTR transporter (TC 3.A.1.202) subfamily. As to quaternary structure, monomer; does not require oligomerization for channel activity. May form oligomers in the membrane. Interacts with SLC26A3, SLC26A6 and NHERF1. Interacts with SHANK2. Interacts with MYO6. Interacts (via C-terminus) with GOPC (via PDZ domain); this promotes CFTR internalization and thereby decreases channel activity. Interacts with SLC4A7 through NHERF1. Found in a complex with MYO5B and RAB11A. Interacts with ANO1. Interacts with SLC26A8. Interacts with AHCYL1; the interaction increases CFTR activity. Interacts with CSE1L. The core-glycosylated form interacts with GORASP2 (via PDZ GRASP-type 1 domain) in respone to ER stress. Interacts with MARCHF2; the interaction leads to CFTR ubiqtuitination and degradation. Interacts with ADGRG2. In terms of processing, N-glycosylated. Phosphorylated; cAMP treatment promotes phosphorylation and activates the channel. Dephosphorylation decreases the ATPase activity (in vitro). Phosphorylation at PKA sites activates the channel. Phosphorylation at PKC sites enhances the response to phosphorylation by PKA. Phosphorylated by AMPK; this inhibits channel activity. Post-translationally, ubiquitinated, leading to its degradation in the lysosome. Deubiquitination by USP10 in early endosomes enhances its endocytic recycling to the cell membrane. Ubiquitinated by RNF185 during ER stress. Ubiquitinated by MARCHF2.

It localises to the apical cell membrane. The protein resides in the early endosome membrane. The protein localises to the cell membrane. Its subcellular location is the recycling endosome membrane. It is found in the endoplasmic reticulum membrane. It localises to the nucleus. The enzyme catalyses ATP + H2O + closed Cl(-) channel = ADP + phosphate + open Cl(-) channel.. The catalysed reaction is chloride(in) = chloride(out). It carries out the reaction hydrogencarbonate(in) = hydrogencarbonate(out). It catalyses the reaction ATP + H2O = ADP + phosphate + H(+). Functionally, epithelial ion channel that plays an important role in the regulation of epithelial ion and water transport and fluid homeostasis. Mediates the transport of chloride ions across the cell membrane. Possesses an intrinsic ATPase activity and utilizes ATP to gate its channel; the passive flow of anions through the channel is gated by cycles of ATP binding and hydrolysis by the ATP-binding domains. The ion channel is also permeable to HCO(3)(-); selectivity depends on the extracellular chloride concentration. Exerts its function also by modulating the activity of other ion channels and transporters. Contributes to the regulation of the pH and the ion content of the epithelial fluid layer. Modulates the activity of the epithelial sodium channel (ENaC) complex, in part by regulating the cell surface expression of the ENaC complex. May regulate bicarbonate secretion and salvage in epithelial cells by regulating the transporter SLC4A7. Can inhibit the chloride channel activity of ANO1. Plays a role in the chloride and bicarbonate homeostasis during sperm epididymal maturation and capacitation. The protein is Cystic fibrosis transmembrane conductance regulator of Nomascus leucogenys (Northern white-cheeked gibbon).